Reading from the N-terminus, the 278-residue chain is Large ribosomal subunit protein uL2 (278 aa).

Disordered stretches follow at residues 1–59 and 222–278; these read MAIR…GGHK and RGAA…NKKR. Residues 16 to 27 show a composition bias toward polar residues; it reads SSVSEFSEITRS. Basic residues-rich tracts occupy residues 45–59 and 269–278; these read VHGHITTRHKGGGHK and VRRRRPNKKR.

It belongs to the universal ribosomal protein uL2 family. In terms of assembly, part of the 50S ribosomal subunit. Forms a bridge to the 30S subunit in the 70S ribosome.

In terms of biological role, one of the primary rRNA binding proteins. Required for association of the 30S and 50S subunits to form the 70S ribosome, for tRNA binding and peptide bond formation. It has been suggested to have peptidyltransferase activity; this is somewhat controversial. Makes several contacts with the 16S rRNA in the 70S ribosome. This is Large ribosomal subunit protein uL2 from Corynebacterium urealyticum (strain ATCC 43042 / DSM 7109).